The sequence spans 407 residues: MSHRKFSAPRHGHLGFLPHKRSHRHRGKVKTWPRDDPSQPVHLTAFLGYKAGMTHTLREVHRPGLKISKREEVEAVTIVETPPLVVVGVVGYVATPRGLRSFKTIFAEHLSDECRRRFYKDWHKSKKKAFTKACKRWRDTDGKKQLQKDFAAMKKYCKVIRVIVHTQMKLLPFRQKKAHIMEIQLNGGTVAEKVAWAQARLEKQVPVHSVFSQSEVIDVIAVTKGRGVKGVTSRWHTKKLPRKTHKGLRKVACIGAWHPARVGCSIARAGQKGYHHRTELNKKIFRIGRGPHMEDGKLVKNNASTSYDVTAKSITPLGGFPHYGEVNNDFVMLKGCIAGTKKRVITLRKSLLVHHSRQAVENIELKFIDTTSKFGHGRFQTAQEKRAFMGPQKKHLEKETPETSGDL.

The segment covering 1 to 31 has biased composition (basic residues); the sequence is MSHRKFSAPRHGHLGFLPHKRSHRHRGKVKT. 2 disordered regions span residues 1–35 and 387–407; these read MSHRKFSAPRHGHLGFLPHKRSHRHRGKVKTWPRD and AFMGPQKKHLEKETPETSGDL.

It belongs to the universal ribosomal protein uL3 family. As to quaternary structure, component of the large ribosomal subunit in striated muscle cells.

Functionally, heart- and skeletal muscle-specific component of the ribosome, which regulates muscle function. Component of the large ribosomal subunit in striated muscle cells: replaces the RPL3 paralog in the ribosome in these cells. The ribosome is a large ribonucleoprotein complex responsible for the synthesis of proteins in the cell. Inhibits myotube growth and muscle function. In Homo sapiens (Human), this protein is Ribosomal protein uL3-like.